Here is a 317-residue protein sequence, read N- to C-terminus: Non-structural protein 2 (317 aa).

ATP contacts are provided by residues 107 to 109 (SVR), lysine 188, and 221 to 223 (HGK). The interval 205 to 241 (LVAELRWQYNRFAVITHGKGHYRVVKYSSVANHADRV) is RNA-binding. Histidine 225 functions as the For NTPase and RTPase activities in the catalytic mechanism. Arginine 227 is an ATP binding site.

It belongs to the rotavirus NSP2 family. As to quaternary structure, homooctamer. Interacts with VP1; this interaction is weak. Interacts with NSP5; this interaction leads to up-regulation of NSP5 phosphorylation and formation of viral factories. Interacts with host DCP1A, DCP1B, DDX6, EDC4 and EIF2S1/eIF2-alpha; these interactions are probably part of the sequestration of some host SGs and PBs proteins in viral factories. The cofactor is Mg(2+).

The protein localises to the host cytoplasm. Its function is as follows. Participates in replication and packaging of the viral genome. Plays a crucial role, together with NSP5, in the formation of virus factories (viroplasms), which are large inclusions in the host cytoplasm where replication intermediates are assembled and viral RNA replication takes place. Displays ssRNA binding, NTPase, RNA triphosphatase (RTPase) and ATP-independent helix-unwinding activities. The unwinding activity may prepare and organize plus-strand RNAs for packaging and replication by removing interfering secondary structures. The RTPase activity plays a role in the removal of the gamma-phosphate from the rotavirus RNA minus strands of dsRNA genome segments. Participates in the selective exclusion of host proteins from stress granules (SG) and P bodies (PB). Also participates in the sequestration of these remodeled organelles in viral factories. The chain is Non-structural protein 2 from Rotavirus A (strain RVA/Human/United States/Wa/1974/G1P1A[8]) (RV-A).